Reading from the N-terminus, the 124-residue chain is Large ribosomal subunit protein bL19 (124 aa).

This sequence belongs to the bacterial ribosomal protein bL19 family.

In terms of biological role, this protein is located at the 30S-50S ribosomal subunit interface and may play a role in the structure and function of the aminoacyl-tRNA binding site. In Orientia tsutsugamushi (strain Boryong) (Rickettsia tsutsugamushi), this protein is Large ribosomal subunit protein bL19.